The following is a 328-amino-acid chain: MQGSVTEFLKPRLVDIDAINPTRSKIVLEPLERGFGHTLGNALRRILLSSMPGCAVTEVEIDGVLHEYSAKEGVQEDIIEILLNLKGLAVTLEGKDEVFLTLAKSGVGPVTASDIQHDGDVTIANPDHVICNLTTNNSEISMRIRVERGRGYVPASSRLSSDDDERPIGRLLLDASFSPVERIAYSVESARVEQRTDLDKLIIDMETNGTLDPEEAIRRASTILAEQLDAFVDLRDVTEPEEKEEKPEFDPILLRPVDDLELTVRSANCLKAEQIQYIGDLVQRTEVELLKTPNLGKKSLTEIKDVLASRGLSLGMRLENWPPASLAE.

An alpha N-terminal domain (alpha-NTD) region spans residues 1–235 (MQGSVTEFLK…EQLDAFVDLR (235 aa)). The interval 249-328 (FDPILLRPVD…ENWPPASLAE (80 aa)) is alpha C-terminal domain (alpha-CTD).

It belongs to the RNA polymerase alpha chain family. As to quaternary structure, homodimer. The RNAP catalytic core consists of 2 alpha, 1 beta, 1 beta' and 1 omega subunit. When a sigma factor is associated with the core the holoenzyme is formed, which can initiate transcription.

The catalysed reaction is RNA(n) + a ribonucleoside 5'-triphosphate = RNA(n+1) + diphosphate. Its function is as follows. DNA-dependent RNA polymerase catalyzes the transcription of DNA into RNA using the four ribonucleoside triphosphates as substrates. In Pseudoalteromonas translucida (strain TAC 125), this protein is DNA-directed RNA polymerase subunit alpha.